The primary structure comprises 154 residues: Prefoldin subunit 2 (154 aa).

Disordered stretches follow at residues 1–20 (MADS…GKGA) and 126–154 (LMGE…VLVS). Residues 9–18 (GKSGGSGAGK) show a composition bias toward gly residues. A compositionally biased stretch (basic and acidic residues) spans 126-139 (LMGEDEKPAAKENS). Over residues 140–154 (EGAGAKASSAGVLVS) the composition is skewed to low complexity.

It belongs to the prefoldin subunit beta family. Heterohexamer of two PFD-alpha type and four PFD-beta type subunits. Component of the PAQosome complex which is responsible for the biogenesis of several protein complexes and which consists of R2TP complex members RUVBL1, RUVBL2, RPAP3 and PIH1D1, URI complex members PFDN2, PFDN6, PDRG1, UXT and URI1 as well as ASDURF, POLR2E and DNAAF10/WDR92. Interacts with URI1; the interaction is phosphorylation-dependent and occurs in a growth-dependent manner.

It localises to the nucleus. The protein resides in the cytoplasm. Its subcellular location is the mitochondrion. Functionally, binds specifically to cytosolic chaperonin (c-CPN) and transfers target proteins to it. Binds to nascent polypeptide chain and promotes folding in an environment in which there are many competing pathways for nonnative proteins. In Mus musculus (Mouse), this protein is Prefoldin subunit 2 (Pfdn2).